A 355-amino-acid polypeptide reads, in one-letter code: Peptide chain release factor 1 (355 aa).

An N5-methylglutamine modification is found at Q230.

Belongs to the prokaryotic/mitochondrial release factor family. In terms of processing, methylated by PrmC. Methylation increases the termination efficiency of RF1.

The protein localises to the cytoplasm. Functionally, peptide chain release factor 1 directs the termination of translation in response to the peptide chain termination codons UAG and UAA. The protein is Peptide chain release factor 1 of Geotalea uraniireducens (strain Rf4) (Geobacter uraniireducens).